Reading from the N-terminus, the 270-residue chain is Mevalonyl-coenzyme A hydratase sidH (270 aa).

Residues 268 to 270 (SKL) carry the PTS1-type peroxisomal targeting signal motif.

This sequence belongs to the enoyl-CoA hydratase/isomerase family.

The protein localises to the peroxisome. It participates in siderophore biosynthesis. In terms of biological role, mevalonyl-coenzyme A hydratase; part of the siderophore biosynthetic pathway. Aspergillus fumigatus produces 4 types of siderophores, low-molecular-mass iron chelators, including excreted fusarinine C (FsC) and triacetylfusarinine C (TAFC) for iron uptake and intacellular ferricrocin (FC) for hyphal and hydroxyferricrocin (HFC) for conidial iron distribution and storage. TAFC consists of 3 N(2)-acetyl-N(5)-anhydromevalonyl-N(5)-hydroxyornithine residues cyclically linked by ester bonds; FC is a cyclic hexapeptide with the structure Gly-Ser-Gly-(N(5)-acetyl-N(5)-hydroxyornithine)x3. The biosynthesis of all four siderophores depends on the hydroxylation of ornithine, catalyzed by the monooxygenase sidA. Subsequently, the pathways for biosynthesis of extra- and intracellular siderophores split. For biosynthesis of extracellular siderophores, the transacylase sidF transfers anhydromevalonyl to N(5)-hydroxyornithine. The required anhydromevalonyl-CoA moiety is derived from mevalonate by CoA ligation and dehydration catalyzed by sidI and sidH respectively. The acetylation of N(5)-hydroxyornithine for FC biosynthesis involves the constitutively expressed sidL. FC is hydroxylated to HFC by an as yet uncharacterized enzyme during conidiation. Assembly of fusarinine C (FsC) and FC is catalyzed by two different nonribosomal peptide synthetases (NRPS), sidD and sidC respectively. Subsequently, sidG catalyzes N2-acetylation of FsC for forming TAFC. Both extra- and intracellular siderophores are crucial for growth during iron limitation and virulence. In Aspergillus fumigatus (strain ATCC MYA-4609 / CBS 101355 / FGSC A1100 / Af293) (Neosartorya fumigata), this protein is Mevalonyl-coenzyme A hydratase sidH.